We begin with the raw amino-acid sequence, 559 residues long: Formate--tetrahydrofolate ligase (559 aa).

67-74 (TPAGEGKS) contacts ATP.

It belongs to the formate--tetrahydrofolate ligase family.

It catalyses the reaction (6S)-5,6,7,8-tetrahydrofolate + formate + ATP = (6R)-10-formyltetrahydrofolate + ADP + phosphate. It functions in the pathway one-carbon metabolism; tetrahydrofolate interconversion. The chain is Formate--tetrahydrofolate ligase from Lactobacillus delbrueckii subsp. bulgaricus (strain ATCC BAA-365 / Lb-18).